The primary structure comprises 157 residues: MSWAKQRVPFLDDDDGEEENDVQDDVDSPVPTRPLVIDEDAEPAAGTSGGLEGGGGDDEDGEDGHALPDLDDDLLLQFEPMLPRVYDLLLPSLDARLNFVNAGQKYAAFLKYVHGDCATCSHGEILREKTQLLTAIVSKLMDINGILEGKDEPAPGK.

The disordered stretch occupies residues 1 to 69; that stretch reads MSWAKQRVPF…DGEDGHALPD (69 aa). Acidic residues predominate over residues 11-27; sequence LDDDDGEEENDVQDDVD.

The protein belongs to the herpesviridae TRM2 protein family. In terms of assembly, associates with TRM1 and TRM3 to form the tripartite terminase complex.

The protein localises to the host nucleus. In terms of biological role, component of the molecular motor that translocates viral genomic DNA in empty capsid during DNA packaging. Forms a tripartite terminase complex together with TRM1 and TRM3 in the host cytoplasm. Once the complex reaches the host nucleus, it interacts with the capsid portal vertex. This portal forms a ring in which genomic DNA is translocated into the capsid. This is Tripartite terminase subunit 2 from Homo sapiens (Human).